We begin with the raw amino-acid sequence, 79 residues long: ATP synthase subunit c (79 aa).

2 helical membrane-spanning segments follow: residues 11-31 and 53-73; these read MAAA…IGIL and FFIV…LGLY.

This sequence belongs to the ATPase C chain family. In terms of assembly, F-type ATPases have 2 components, F(1) - the catalytic core - and F(0) - the membrane proton channel. F(1) has five subunits: alpha(3), beta(3), gamma(1), delta(1), epsilon(1). F(0) has three main subunits: a(1), b(2) and c(10-14). The alpha and beta chains form an alternating ring which encloses part of the gamma chain. F(1) is attached to F(0) by a central stalk formed by the gamma and epsilon chains, while a peripheral stalk is formed by the delta and b chains.

Its subcellular location is the cell inner membrane. Its function is as follows. F(1)F(0) ATP synthase produces ATP from ADP in the presence of a proton or sodium gradient. F-type ATPases consist of two structural domains, F(1) containing the extramembraneous catalytic core and F(0) containing the membrane proton channel, linked together by a central stalk and a peripheral stalk. During catalysis, ATP synthesis in the catalytic domain of F(1) is coupled via a rotary mechanism of the central stalk subunits to proton translocation. Key component of the F(0) channel; it plays a direct role in translocation across the membrane. A homomeric c-ring of between 10-14 subunits forms the central stalk rotor element with the F(1) delta and epsilon subunits. This is ATP synthase subunit c from Serratia proteamaculans (strain 568).